A 479-amino-acid polypeptide reads, in one-letter code: Membrane-bound lytic murein transglycosylase F (479 aa).

An N-terminal signal peptide occupies residues 1-15; that stretch reads MKRLLLVLCYITLLA. The interval 16-258 is non-LT domain; it reads GCQKVVVEQE…HLNEKYFAHV (243 aa). Residues 260-479 form an LT domain region; that stretch reads RFDYVDTRAF…QTDAIQPQQP (220 aa). E303 is a catalytic residue. A disordered region spans residues 457 to 479; it reads LQTAEAKETEEKPQTDAIQPQQP. A compositionally biased stretch (basic and acidic residues) spans 461-470; the sequence is EAKETEEKPQ.

It in the N-terminal section; belongs to the bacterial solute-binding protein 3 family. This sequence in the C-terminal section; belongs to the transglycosylase Slt family.

It is found in the cell outer membrane. The catalysed reaction is Exolytic cleavage of the (1-&gt;4)-beta-glycosidic linkage between N-acetylmuramic acid (MurNAc) and N-acetylglucosamine (GlcNAc) residues in peptidoglycan, from either the reducing or the non-reducing ends of the peptidoglycan chains, with concomitant formation of a 1,6-anhydrobond in the MurNAc residue.. Functionally, murein-degrading enzyme that degrades murein glycan strands and insoluble, high-molecular weight murein sacculi, with the concomitant formation of a 1,6-anhydromuramoyl product. Lytic transglycosylases (LTs) play an integral role in the metabolism of the peptidoglycan (PG) sacculus. Their lytic action creates space within the PG sacculus to allow for its expansion as well as for the insertion of various structures such as secretion systems and flagella. This Shewanella pealeana (strain ATCC 700345 / ANG-SQ1) protein is Membrane-bound lytic murein transglycosylase F.